The sequence spans 906 residues: Protein translocase subunit SecA (906 aa).

ATP-binding positions include Q86, 104–108 (GEGKT), and D499. The segment at 862–887 (KPVVSRIDPKDRNPDDPTSWGRVSRN) is disordered. Zn(2+) contacts are provided by C890, C892, C901, and H902.

Belongs to the SecA family. In terms of assembly, monomer and homodimer. Part of the essential Sec protein translocation apparatus which comprises SecA, SecYEG and auxiliary proteins SecDF-YajC and YidC. It depends on Zn(2+) as a cofactor.

It is found in the cell inner membrane. The protein localises to the cytoplasm. It carries out the reaction ATP + H2O + cellular proteinSide 1 = ADP + phosphate + cellular proteinSide 2.. In terms of biological role, part of the Sec protein translocase complex. Interacts with the SecYEG preprotein conducting channel. Has a central role in coupling the hydrolysis of ATP to the transfer of proteins into and across the cell membrane, serving both as a receptor for the preprotein-SecB complex and as an ATP-driven molecular motor driving the stepwise translocation of polypeptide chains across the membrane. In Rickettsia peacockii (strain Rustic), this protein is Protein translocase subunit SecA.